Consider the following 388-residue polypeptide: Succinate--CoA ligase [ADP-forming] subunit beta (388 aa).

In terms of domain architecture, ATP-grasp spans lysine 9–glutamate 244. ATP-binding positions include lysine 46, glycine 53–glycine 55, glutamate 99, alanine 102, and glutamate 107. Mg(2+) contacts are provided by asparagine 199 and aspartate 213. Residues asparagine 264 and glycine 321–methionine 323 each bind substrate.

Belongs to the succinate/malate CoA ligase beta subunit family. Heterotetramer of two alpha and two beta subunits. Mg(2+) serves as cofactor.

It carries out the reaction succinate + ATP + CoA = succinyl-CoA + ADP + phosphate. The enzyme catalyses GTP + succinate + CoA = succinyl-CoA + GDP + phosphate. The protein operates within carbohydrate metabolism; tricarboxylic acid cycle; succinate from succinyl-CoA (ligase route): step 1/1. Succinyl-CoA synthetase functions in the citric acid cycle (TCA), coupling the hydrolysis of succinyl-CoA to the synthesis of either ATP or GTP and thus represents the only step of substrate-level phosphorylation in the TCA. The beta subunit provides nucleotide specificity of the enzyme and binds the substrate succinate, while the binding sites for coenzyme A and phosphate are found in the alpha subunit. The polypeptide is Succinate--CoA ligase [ADP-forming] subunit beta (Burkholderia cenocepacia (strain HI2424)).